Consider the following 208-residue polypeptide: Holliday junction resolvase RecU (208 aa).

Residues 1–25 (MNYPNGKPFNRNKTKVGRTNDHKSS) are disordered. Mg(2+) contacts are provided by T87, D89, E102, and Q121.

The protein belongs to the RecU family. Requires Mg(2+) as cofactor.

It is found in the cytoplasm. The catalysed reaction is Endonucleolytic cleavage at a junction such as a reciprocal single-stranded crossover between two homologous DNA duplexes (Holliday junction).. Functionally, endonuclease that resolves Holliday junction intermediates in genetic recombination. Cleaves mobile four-strand junctions by introducing symmetrical nicks in paired strands. Promotes annealing of linear ssDNA with homologous dsDNA. Required for DNA repair, homologous recombination and chromosome segregation. This chain is Holliday junction resolvase RecU, found in Staphylococcus carnosus (strain TM300).